The chain runs to 273 residues: Polyamine aminopropyltransferase (273 aa).

The PABS domain occupies 5–238 (ENWFSERYSD…GFWSFTVASP (234 aa)). Position 34 (Gln-34) interacts with S-methyl-5'-thioadenosine. The spermidine site is built by His-65 and Asp-90. Residues Glu-109 and 140–141 (DG) each bind S-methyl-5'-thioadenosine. The Proton acceptor role is filled by Asp-158. A spermidine-binding site is contributed by 158-161 (DSTD). Pro-165 serves as a coordination point for S-methyl-5'-thioadenosine.

The protein belongs to the spermidine/spermine synthase family. As to quaternary structure, homodimer or homotetramer.

The protein localises to the cytoplasm. The enzyme catalyses S-adenosyl 3-(methylsulfanyl)propylamine + putrescine = S-methyl-5'-thioadenosine + spermidine + H(+). Its pathway is amine and polyamine biosynthesis; spermidine biosynthesis; spermidine from putrescine: step 1/1. Its function is as follows. Catalyzes the irreversible transfer of a propylamine group from the amino donor S-adenosylmethioninamine (decarboxy-AdoMet) to putrescine (1,4-diaminobutane) to yield spermidine. This is Polyamine aminopropyltransferase from Thermoplasma acidophilum (strain ATCC 25905 / DSM 1728 / JCM 9062 / NBRC 15155 / AMRC-C165).